The sequence spans 556 residues: U3 small nucleolar RNA-associated protein 18 homolog (556 aa).

A compositionally biased stretch (basic residues) spans 1 to 24 (MPPERRRRMKLDRRTGAKPKRKPG). Positions 1-70 (MPPERRRRMK…IAVAAAEEER (70 aa)) are disordered. Low complexity predominate over residues 43 to 65 (APSSQRKPPARPSAAAAAIAVAA). A Glycyl lysine isopeptide (Lys-Gly) (interchain with G-Cter in SUMO2) cross-link involves residue lysine 84. The tract at residues 111–143 (RGPRVQEHEDSGDSEVENEAKGNFPPQKKPVWV) is disordered. 2 positions are modified to phosphoserine: serine 121 and serine 124. Residues lysine 183 and lysine 201 each participate in a glycyl lysine isopeptide (Lys-Gly) (interchain with G-Cter in SUMO2) cross-link. Residues 193 to 219 (VPAWAETTKRKTSSDDESEEDEDDLLQ) form a disordered region. Threonine 204 carries the phosphothreonine modification. Residues serine 205, serine 206, and serine 210 each carry the phosphoserine modification. The segment covering 207-216 (DDESEEDEDD) has biased composition (acidic residues). A Phosphothreonine modification is found at threonine 221. WD repeat units follow at residues 249–288 (PTVARISSVQFHPGAQIVMVAGLDNAVSLFQVDGKTNPKI), 293–333 (LERF…LIPV), 339–380 (LKEK…GSMK), 381–419 (INGRVAASTFSSDSKKVYASSGDGEVYVWDVNSRKCLNR), 421–462 (VDEG…QETN), and 471–512 (NLVT…VFSN). Residue lysine 517 forms a Glycyl lysine isopeptide (Lys-Gly) (interchain with G-Cter in SUMO2) linkage.

Belongs to the WD repeat UTP18 family. Part of the small subunit (SSU) processome, composed of more than 70 proteins and the RNA chaperone small nucleolar RNA (snoRNA) U3.

The protein resides in the nucleus. It is found in the nucleolus. In terms of biological role, part of the small subunit (SSU) processome, first precursor of the small eukaryotic ribosomal subunit. During the assembly of the SSU processome in the nucleolus, many ribosome biogenesis factors, an RNA chaperone and ribosomal proteins associate with the nascent pre-rRNA and work in concert to generate RNA folding, modifications, rearrangements and cleavage as well as targeted degradation of pre-ribosomal RNA by the RNA exosome. Involved in nucleolar processing of pre-18S ribosomal RNA. In Homo sapiens (Human), this protein is U3 small nucleolar RNA-associated protein 18 homolog.